The primary structure comprises 627 residues: 1-deoxy-D-xylulose-5-phosphate synthase (627 aa).

Residues His-80 and 121-123 (GHS) contribute to the thiamine diphosphate site. Asp-152 provides a ligand contact to Mg(2+). Thiamine diphosphate-binding positions include 153–154 (GA), Asn-181, Tyr-288, and Glu-370. Asn-181 is a binding site for Mg(2+).

This sequence belongs to the transketolase family. DXPS subfamily. As to quaternary structure, homodimer. Mg(2+) is required as a cofactor. Thiamine diphosphate serves as cofactor.

It carries out the reaction D-glyceraldehyde 3-phosphate + pyruvate + H(+) = 1-deoxy-D-xylulose 5-phosphate + CO2. Its pathway is metabolic intermediate biosynthesis; 1-deoxy-D-xylulose 5-phosphate biosynthesis; 1-deoxy-D-xylulose 5-phosphate from D-glyceraldehyde 3-phosphate and pyruvate: step 1/1. Catalyzes the acyloin condensation reaction between C atoms 2 and 3 of pyruvate and glyceraldehyde 3-phosphate to yield 1-deoxy-D-xylulose-5-phosphate (DXP). This Aliivibrio salmonicida (strain LFI1238) (Vibrio salmonicida (strain LFI1238)) protein is 1-deoxy-D-xylulose-5-phosphate synthase.